Consider the following 109-residue polypeptide: Thiosulfate sulfurtransferase GlpE (109 aa).

The 89-residue stretch at 16–104 (RSNGAVVVDI…WRATFPSETA (89 aa)) folds into the Rhodanese domain. Cys-64 functions as the Cysteine persulfide intermediate in the catalytic mechanism.

The protein belongs to the GlpE family.

The protein resides in the cytoplasm. The enzyme catalyses thiosulfate + hydrogen cyanide = thiocyanate + sulfite + 2 H(+). The catalysed reaction is thiosulfate + [thioredoxin]-dithiol = [thioredoxin]-disulfide + hydrogen sulfide + sulfite + 2 H(+). In terms of biological role, transferase that catalyzes the transfer of sulfur from thiosulfate to thiophilic acceptors such as cyanide or dithiols. May function in a CysM-independent thiosulfate assimilation pathway by catalyzing the conversion of thiosulfate to sulfite, which can then be used for L-cysteine biosynthesis. This is Thiosulfate sulfurtransferase GlpE from Ectopseudomonas mendocina (strain ymp) (Pseudomonas mendocina).